A 515-amino-acid polypeptide reads, in one-letter code: Putative cytochrome P450 CYP13A2 (515 aa).

Residue cysteine 460 participates in heme binding.

Belongs to the cytochrome P450 family. Requires heme as cofactor.

Functionally, cytochromes P450 are a group of heme-thiolate monooxygenases. They oxidize a variety of structurally unrelated compounds, including steroids, fatty acids, and xenobiotics. In Caenorhabditis elegans, this protein is Putative cytochrome P450 CYP13A2 (cyp-13A2).